We begin with the raw amino-acid sequence, 1088 residues long: RNA-directed RNA polymerase (1088 aa).

One can recognise a RdRp catalytic domain in the interval 501-687 (LSYGDVTRFL…AKRYIAGGKI (187 aa)).

Belongs to the reoviridae RNA-directed RNA polymerase family. In terms of assembly, interacts with VP3 (Potential). Interacts with VP2; this interaction activates VP1. Interacts with NSP5; this interaction is probably necessary for the formation of functional virus factories. Interacts with NSP2; this interaction is weak. It depends on Mg(2+) as a cofactor.

Its subcellular location is the virion. It catalyses the reaction RNA(n) + a ribonucleoside 5'-triphosphate = RNA(n+1) + diphosphate. Functionally, RNA-directed RNA polymerase that is involved in both transcription and genome replication. Together with VP3 capping enzyme, forms an enzyme complex positioned near the channels situated at each of the five-fold vertices of the core. Following infection, the outermost layer of the virus is lost, leaving a double-layered particle (DLP) made up of the core and VP6 shell. VP1 then catalyzes the transcription of fully conservative plus-strand genomic RNAs that are extruded through the DLP's channels into the cytoplasm where they function as mRNAs for translation of viral proteins. One copy of each of the viral (+)RNAs is also recruited during core assembly, together with newly synthesized polymerase complexes and VP2. The polymerase of these novo-formed particles catalyzes the synthesis of complementary minus-strands leading to dsRNA formation. To do so, the polymerase specifically recognizes and binds 4 bases 5'-UGUG-3' in the conserved 3'-sequence of plus-strand RNA templates. VP2 presumably activates the autoinhibited VP1-RNA complex to coordinate packaging and genome replication. Once dsRNA synthesis is complete, the polymerase switches to the transcriptional mode, thus providing secondary transcription. This Rotavirus A (strain RVA/Cow/United States/NCDV-Lincoln/1969/G6P6[1]) (RV-A) protein is RNA-directed RNA polymerase.